The following is a 782-amino-acid chain: Coiled-coil alpha-helical rod protein 1 (782 aa).

Composition is skewed to basic and acidic residues over residues 62-74 (ERDV…EPGR) and 208-218 (ETRRAGEAKEL). Disordered stretches follow at residues 62–82 (ERDV…WGLE) and 177–218 (EQLS…AKEL). Coiled coils occupy residues 82 to 314 (EGSQ…ELTR), 344 to 437 (LMVQ…NAVS), and 498 to 691 (VADV…QQEG).

The protein localises to the cytoplasm. It localises to the nucleus. In terms of biological role, may be a regulator of keratinocyte proliferation or differentiation. In Pan troglodytes (Chimpanzee), this protein is Coiled-coil alpha-helical rod protein 1 (CCHCR1).